A 365-amino-acid polypeptide reads, in one-letter code: Fatty acid hydroxylase vlmA (365 aa).

Residues threonine 20–isoleucine 41 are disordered. N-linked (GlcNAc...) asparagine glycosylation occurs at asparagine 47. The next 4 membrane-spanning stretches (helical) occupy residues isoleucine 62–isoleucine 82, valine 89–leucine 109, leucine 144–tyrosine 164, and tryptophan 179–tyrosine 199. Residues leucine 189–threonine 335 form the Fatty acid hydroxylase domain.

Belongs to the sterol desaturase family. TMEM195 subfamily.

It is found in the membrane. Its pathway is secondary metabolite biosynthesis. In terms of biological role, fatty acid hydroxylase; part of the gene cluster that mediates the biosynthesis of verlamelin, a lipopeptide that exhibits antifungal activity against plant pathogenic fungi. Verlamelin is a cyclic hexadepsipeptide and is bridged by ester bonding between a 5-hydroxytetradecanoic acid moiety and a carboxyl group on the terminal Val of amide-bonded tetradecanoyl-hexapeptide D-allo-Thr-D-Ala-L-Pro-L-Gln-D-Tyr-L-Val. VlmA and vlmB are altogether regarded as essential components in the biosynthesis of 5-hydroxytetradecanoic acid. VlmA catalyzes the hydroxylation at position C5 of tetradecanoic acid produced in primary metabolism, while the precise function of vlmB still remains to be solved. To be loaded onto the waiting NRPS, 5-hydroxytetradecanoic acid is activated in the form of acyladenylate by the AMP-dependent ligase vlmC. VlmS seems to accept the fatty-acyl intermediate onto the initial module to further elongate amino acid residues by the downstream modules. In addition, in the last module at its C-terminus, vlmS contains a surplus condensation (C) domain that may be involved in cyclization, the last step to form verlamelin. This is Fatty acid hydroxylase vlmA from Lecanicillium sp.